The sequence spans 296 residues: MFS-type transporter pytF (296 aa).

Helical transmembrane passes span 30-50 (WLVV…LNSF), 72-92 (WIGS…GPVF), 98-118 (KVLF…VSLC), 124-144 (FILA…YPTI), 157-177 (LAMG…PLIL), 180-200 (LFAV…SFAL), and 238-258 (VVGM…IPLF). An N-linked (GlcNAc...) asparagine glycan is attached at N265. Residues 271-291 (SLISILNAGSFVGRIVSGALA) traverse the membrane as a helical segment.

The protein belongs to the major facilitator superfamily. Monocarboxylate porter (TC 2.A.1.13) family.

It is found in the cell membrane. Its function is as follows. MFS-type transporter; part of the gene cluster that mediates the biosynthesis of pyranterreones, a family of antioxidative compounds. Directly involved in the secretion of pyranterreones. The polypeptide is MFS-type transporter pytF (Aspergillus terreus (strain NIH 2624 / FGSC A1156)).